The primary structure comprises 422 residues: Adhesin YadA (422 aa).

An N-terminal signal peptide occupies residues 1–25; it reads MTKDFKISVSAALISALFSSPYAFA. Residues 26-330 form a surface exposed passenger domain region; that stretch reads NNDEVHFTAV…KKAIRESNQY (305 aa). The stretch at 206–236 forms a coiled coil; sequence VNVAQLKKEIEKTQVNANKKSAEVLGIANNY. The tract at residues 331 to 368 is outer membrane translocation of the passenger domain; that stretch reads TDHKFRQLDNRLDKLDTRVDKGLASSAALNSLFQPYGV. A run of 4 beta stranded transmembrane segments spans residues 369–379, 383–394, 401–407, and 411–422; these read GKVNFTAGVGG, SQALAIGSGYRV, KAGVAYA, and DVMYNASFNIEW. Residues 369-422 are translocator domain; the sequence is GKVNFTAGVGGYRSSQALAIGSGYRVNESVALKAGVAYAGSSDVMYNASFNIEW.

This sequence belongs to the autotransporter-2 (AT-2) (TC 1.B.40) family. In terms of assembly, homotrimer; trimers are very stable, not disrupted by heating at 95 degrees Celsius for 10 minutes in SDS sample buffer.

The protein localises to the cell surface. It localises to the cell outer membrane. In terms of biological role, collagen-binding outer membrane protein forming a fibrillar matrix on the bacterial cell surface and phagocytosis resistance. Promotes initial attachment and invasion of eukaryotic cells. Also protects the bacteria by being responsible for agglutination, serum resistance and complement inactivation. Gly-389 plays an important role in this protein; replacing it with increasingly large polar residues decreases expression levels and trimer stability. Residues larger than Ser (Thr, Asn or His) significantly decrease serume resistance and bacterial autoagglution without affecting adhesion to host cells or host cell cytokine production. The protein is Adhesin YadA of Yersinia enterocolitica serotype O:8 / biotype 1B (strain NCTC 13174 / 8081).